The sequence spans 393 residues: MEENNLQCSSVVDGNFEEVPRETAIQFKPPLYRQRYQFVKNLVDQHEPKKVADLGCGDTSLLRLLKVNPCIELLVGVDINEDKLRWRGDSLAPFMGDFLKPRDLNLTIILYHGSVVERDSRLLGFDLITCIELIEHLDSGDLARFPEVVFGYLSPSMIVISTPNSEFNPLFPSVTLRDSDHKFEWTRMEFQTWALYVANRYDYSVEFTGVGEPPAGAENVGYCTQIGIFQKNGGRATEACVSEQHDQHVYKAVFTTSYPSLQQERFFKLVLVNEVSQQVESLRVSHLPRRKEQDGEQGDKPKDIGGSKAPVPCFGPVFTEVEKAKIENSPKPFCVGDKFFVPLQRLLAYPRLNRLCANEEMMRSVIADSIPLSSDGSAVVTDLCNYFDEQFEF.

Positions 60, 78, and 114 each coordinate S-adenosyl-L-methionine. Mg(2+)-binding residues include glutamate 132, glutamate 135, histidine 136, and histidine 181. Positions 283–309 (RVSHLPRRKEQDGEQGDKPKDIGGSKA) are disordered. A compositionally biased stretch (basic and acidic residues) spans 290-305 (RKEQDGEQGDKPKDIG).

The protein belongs to the methyltransferase superfamily. HEN1 family. Mg(2+) is required as a cofactor.

It localises to the cytoplasm. It catalyses the reaction small RNA 3'-end nucleotide + S-adenosyl-L-methionine = small RNA 3'-end 2'-O-methylnucleotide + S-adenosyl-L-homocysteine + H(+). Its function is as follows. Methyltransferase that adds a 2'-O-methyl group at the 3'-end of piRNAs, a class of 24 to 30 nucleotide RNAs that are generated by a Dicer-independent mechanism and are primarily derived from transposons and other repeated sequence elements. This probably protects the 3'-end of piRNAs from uridylation activity and subsequent degradation. Stabilization of piRNAs is essential for gametogenesis. The protein is Small RNA 2'-O-methyltransferase (HENMT1) of Macaca fascicularis (Crab-eating macaque).